The primary structure comprises 394 residues: G2/mitotic-specific cyclin-B2 (394 aa).

It belongs to the cyclin family. Cyclin AB subfamily. Interacts with the CDK1 protein kinase to form a serine/threonine kinase holoenzyme complex also known as maturation promoting factor (MPF). The cyclin subunit imparts substrate specificity to the complex.

Functionally, essential for the control of the cell cycle at the G2/M (mitosis) transition. This is G2/mitotic-specific cyclin-B2 (ccnb2) from Anguilla japonica (Japanese eel).